A 681-amino-acid chain; its full sequence is Long-chain-fatty-acid--CoA ligase heimdall (681 aa).

ATP is bound by residues 223–231 (TSGTVGMPK), 414–419 (ECYGMS), D491, R506, and K639.

Belongs to the ATP-dependent AMP-binding enzyme family. Bubblegum subfamily.

The enzyme catalyses a long-chain fatty acid + ATP + CoA = a long-chain fatty acyl-CoA + AMP + diphosphate. Mediates activation of long-chain fatty acids for both synthesis of cellular lipids, and degradation via beta-oxidation. Probably by regulating lipid storage and catabolism, plays a role in neuronal function. The sequence is that of Long-chain-fatty-acid--CoA ligase heimdall from Drosophila melanogaster (Fruit fly).